A 438-amino-acid polypeptide reads, in one-letter code: Putative F-box/FBD/LRR-repeat protein At5g44950 (438 aa).

Positions 3–49 (RDRISELPDGLLNHILMYLHIEESIRTSVLSSRWRKLWLKVPGLDVN) constitute an F-box domain. LRR repeat units lie at residues 246–275 (LSSL…DLTK) and 286–310 (ISSV…KIGQ). An FBD domain is found at 355–407 (PEQIDFTNLPRCLISTLEYVEIKQLTMREESGIKLVKYFLENSAVLKKLTLSF).

The protein is Putative F-box/FBD/LRR-repeat protein At5g44950 of Arabidopsis thaliana (Mouse-ear cress).